The primary structure comprises 166 residues: Orotate phosphoribosyltransferase (166 aa).

Residues Arg83, Lys84, His89, and 109-117 (DDVATTGGS) each bind 5-phospho-alpha-D-ribose 1-diphosphate. Residues Thr113 and Arg141 each contribute to the orotate site.

The protein belongs to the purine/pyrimidine phosphoribosyltransferase family. PyrE subfamily. Homodimer. Requires Mg(2+) as cofactor.

The enzyme catalyses orotidine 5'-phosphate + diphosphate = orotate + 5-phospho-alpha-D-ribose 1-diphosphate. Its pathway is pyrimidine metabolism; UMP biosynthesis via de novo pathway; UMP from orotate: step 1/2. Its function is as follows. Catalyzes the transfer of a ribosyl phosphate group from 5-phosphoribose 1-diphosphate to orotate, leading to the formation of orotidine monophosphate (OMP). The protein is Orotate phosphoribosyltransferase of Picrophilus torridus (strain ATCC 700027 / DSM 9790 / JCM 10055 / NBRC 100828 / KAW 2/3).